The primary structure comprises 345 residues: UPF0324 membrane protein RB0971 (345 aa).

Helical transmembrane passes span 13 to 32 (SLSVVLSTYGPGLLVTAAVA), 42 to 61 (YGAPAMLMALLLGIAFHFLA), 93 to 115 (LLIGLGGGTILLLVSAIVATILF), 130 to 152 (ALLTSGAVAICGASAAMAIAAVL), 161 to 183 (NLIFTVLSVTVLSTLAMIGYPIV), 193 to 215 (ATGIFFGGTIHDVAQVVGAGFSV), 228 to 247 (LIRVTMLAPVVLIFSLVLRS), 262 to 284 (VPGFVLAFLVLAGFNSAGLVPVL), 291 to 310 (AISRWALLAGIVAVGMKTSL), and 320 to 342 (AVALVVAETLFIAVFILAGMYYL).

This sequence belongs to the UPF0324 family.

Its subcellular location is the cell membrane. This is UPF0324 membrane protein RB0971 from Rhizobium meliloti (strain 1021) (Ensifer meliloti).